A 316-amino-acid polypeptide reads, in one-letter code: Taste receptor type 2 member 3 (316 aa).

The Extracellular portion of the chain corresponds to 1–7 (MFGFIEG). The chain crosses the membrane as a helical span at residues 8 to 28 (VFLVLTITEFILGNLVNGFIV). Residues 29-50 (SINSSYWFKSKKISLSNFIITS) lie on the Cytoplasmic side of the membrane. Residues 51–71 (LALFRIFLLWIIFIDSLIIVF) traverse the membrane as a helical segment. Topologically, residues 72-86 (SYQTHDSGIMMQLID) are extracellular. Residues 87–107 (VFWTFTNHFSIWLISCLSVFY) traverse the membrane as a helical segment. At 108–128 (CLKIASFSHPSFLWLKWRASR) the chain is on the cytoplasmic side. A helical transmembrane segment spans residues 129–149 (VVVGMLWGALLLSCVSTMSLM). Topologically, residues 150–186 (NEFKIYSALTRSKDTPNMTEYIRLKRQEYNLMHVLGN) are extracellular. The N-linked (GlcNAc...) asparagine glycan is linked to N166. The chain crosses the membrane as a helical span at residues 187 to 207 (LWKIPSLIVSLVAYLLLLLSL). Residues 208–234 (GKHTQQMQQYSIDSRDQSAEAHKRAMR) are Cytoplasmic-facing. A helical transmembrane segment spans residues 235–255 (IISSFLLFFLFYFLSFMILSS). The Extracellular segment spans residues 256–266 (SRFLPETRIAR). The chain crosses the membrane as a helical span at residues 267-287 (IIGVVISMSYLVGDSFILIVC). Residues 288–316 (NNKLKHTFVAMLPCECGHLKPGSKGPSAS) lie on the Cytoplasmic side of the membrane.

Belongs to the G-protein coupled receptor T2R family.

Its subcellular location is the membrane. Functionally, gustducin-coupled receptor implicated in the perception of bitter compounds in the oral cavity and the gastrointestinal tract. Signals through PLCB2 and the calcium-regulated cation channel TRPM5. In Mus musculus (Mouse), this protein is Taste receptor type 2 member 3 (Tas2r3).